The primary structure comprises 49 residues: L-amino-acid oxidase (49 aa).

Position 43–44 (43–44 (MS)) interacts with FAD.

This sequence belongs to the flavin monoamine oxidase family. FIG1 subfamily. As to quaternary structure, homodimer; non-covalently linked. It depends on FAD as a cofactor. Post-translationally, N-glycosylated. Expressed by the venom gland.

It localises to the secreted. The enzyme catalyses an L-alpha-amino acid + O2 + H2O = a 2-oxocarboxylate + H2O2 + NH4(+). The catalysed reaction is L-leucine + O2 + H2O = 4-methyl-2-oxopentanoate + H2O2 + NH4(+). Catalyzes an oxidative deamination of predominantly hydrophobic and aromatic L-amino acids, thus producing hydrogen peroxide that may contribute to the diverse toxic effects of this enzyme. Shows activity on L-Leu. Exhibits diverse biological activities, such as hemorrhage, hemolysis, edema, antibacterial and antiparasitic activities, as well as regulation of platelet aggregation. Its effect on platelets is controversial, since it either induces aggregation or inhibits agonist-induced aggregation. These different effects are probably due to different experimental conditions. In addition, this protein induces apoptosis and necrosis and has inhibitory effects on rat kidney function (decrease of blood flow and glomerular filtration). The chain is L-amino-acid oxidase from Bothrops insularis (Golden lancehead).